The sequence spans 108 residues: Nucleoid-associated protein Bphy_0952 (108 aa).

The tract at residues 87–108 is disordered; the sequence is AQEKMGGMTSGLPLPPGFKLPF. The segment covering 99-108 has biased composition (pro residues); the sequence is PLPPGFKLPF.

This sequence belongs to the YbaB/EbfC family. As to quaternary structure, homodimer.

The protein localises to the cytoplasm. It localises to the nucleoid. Functionally, binds to DNA and alters its conformation. May be involved in regulation of gene expression, nucleoid organization and DNA protection. The chain is Nucleoid-associated protein Bphy_0952 from Paraburkholderia phymatum (strain DSM 17167 / CIP 108236 / LMG 21445 / STM815) (Burkholderia phymatum).